The following is a 233-amino-acid chain: tRNA (guanine-N(1)-)-methyltransferase (233 aa).

S-adenosyl-L-methionine contacts are provided by residues glycine 121 and 140 to 145 (IGDYIL).

The protein belongs to the RNA methyltransferase TrmD family. As to quaternary structure, homodimer.

Its subcellular location is the cytoplasm. It carries out the reaction guanosine(37) in tRNA + S-adenosyl-L-methionine = N(1)-methylguanosine(37) in tRNA + S-adenosyl-L-homocysteine + H(+). Specifically methylates guanosine-37 in various tRNAs. The chain is tRNA (guanine-N(1)-)-methyltransferase from Endomicrobium trichonymphae.